The chain runs to 252 residues: Probable anguibactin biosynthesis thioesterase AngT (252 aa).

Catalysis depends on residues S92 and H229.

Belongs to the thioesterase family.

Its pathway is siderophore biosynthesis; anguibactin biosynthesis. Probable thioesterase. Involved in anguibactin production, but is not essential for virulence or iron transport gene expression. This is Probable anguibactin biosynthesis thioesterase AngT (angT) from Vibrio anguillarum (strain ATCC 68554 / 775) (Listonella anguillarum).